A 151-amino-acid polypeptide reads, in one-letter code: Ribonuclease P protein component (151 aa).

Residues 1–62 (MDEKDLATQP…LKGDSAFRRL (62 aa)) are disordered. The segment covering 28–48 (GAQGAEAQAAEGPLAAHAQGA) has biased composition (low complexity).

It belongs to the RnpA family. As to quaternary structure, consists of a catalytic RNA component (M1 or rnpB) and a protein subunit.

It carries out the reaction Endonucleolytic cleavage of RNA, removing 5'-extranucleotides from tRNA precursor.. RNaseP catalyzes the removal of the 5'-leader sequence from pre-tRNA to produce the mature 5'-terminus. It can also cleave other RNA substrates such as 4.5S RNA. The protein component plays an auxiliary but essential role in vivo by binding to the 5'-leader sequence and broadening the substrate specificity of the ribozyme. The protein is Ribonuclease P protein component of Thermus oshimai.